A 56-amino-acid polypeptide reads, in one-letter code: Large ribosomal subunit protein bL32 (56 aa).

The segment at Met1–Ala26 is disordered. The span at Lys7–Arg16 shows a compositional bias: basic residues.

The protein belongs to the bacterial ribosomal protein bL32 family.

This Moritella marina (Vibrio marinus) protein is Large ribosomal subunit protein bL32 (rpmF).